The primary structure comprises 267 residues: Phosphate import ATP-binding protein PstB 2 (267 aa).

The ABC transporter domain maps to 21 to 262 (LATKDLHVYY…AQCQSTNDYV (242 aa)). 53-60 (GPSGCGKS) provides a ligand contact to ATP.

The protein belongs to the ABC transporter superfamily. Phosphate importer (TC 3.A.1.7) family. The complex is composed of two ATP-binding proteins (PstB), two transmembrane proteins (PstC and PstA) and a solute-binding protein (PstS).

It localises to the cell membrane. It catalyses the reaction phosphate(out) + ATP + H2O = ADP + 2 phosphate(in) + H(+). In terms of biological role, part of the ABC transporter complex PstSACB involved in phosphate import. Responsible for energy coupling to the transport system. The sequence is that of Phosphate import ATP-binding protein PstB 2 from Streptococcus pyogenes serotype M1.